The primary structure comprises 199 residues: Photosystem II D1 precursor processing protein PSB27-H2, chloroplastic (199 aa).

Belongs to the Psb27 family. In terms of assembly, interacts with the C-terminus of both the precursor and mature form of D1.

The protein resides in the plastid. It is found in the chloroplast thylakoid lumen. Its function is as follows. Required, but not essential, for D1 (psbA) precursor processing and thus correct photosystem II assembly (PSII). The sequence is that of Photosystem II D1 precursor processing protein PSB27-H2, chloroplastic (PSB27-2) from Arabidopsis thaliana (Mouse-ear cress).